The chain runs to 252 residues: Triosephosphate isomerase (252 aa).

A substrate-binding site is contributed by 10–12; it reads NWK. The active-site Electrophile is H96. E168 functions as the Proton acceptor in the catalytic mechanism. Residues G174, S214, and 235 to 236 each bind substrate; that span reads GG.

It belongs to the triosephosphate isomerase family. Homodimer.

Its subcellular location is the cytoplasm. It catalyses the reaction D-glyceraldehyde 3-phosphate = dihydroxyacetone phosphate. Its pathway is carbohydrate biosynthesis; gluconeogenesis. The protein operates within carbohydrate degradation; glycolysis; D-glyceraldehyde 3-phosphate from glycerone phosphate: step 1/1. Involved in the gluconeogenesis. Catalyzes stereospecifically the conversion of dihydroxyacetone phosphate (DHAP) to D-glyceraldehyde-3-phosphate (G3P). The protein is Triosephosphate isomerase of Lactococcus lactis subsp. cremoris (strain MG1363).